The chain runs to 270 residues: Cell division protein DivIB (270 aa).

Residues M1–R38 lie on the Cytoplasmic side of the membrane. A helical transmembrane segment spans residues L39–D59. Residues K60–S270 are Extracellular-facing. The 72-residue stretch at S64–A135 folds into the POTRA domain.

It belongs to the FtsQ/DivIB family. DivIB subfamily.

It localises to the cell membrane. Its function is as follows. Cell division protein that may be involved in stabilizing or promoting the assembly of the division complex. The polypeptide is Cell division protein DivIB (Erysipelothrix rhusiopathiae (strain Fujisawa)).